A 670-amino-acid chain; its full sequence is Leucine-rich repeat-containing protein 45 (670 aa).

6 LRR repeats span residues Thr-58 to Arg-80, Val-87 to Gly-107, Ser-115 to Phe-136, Ala-145 to Leu-166, Thr-173 to Asn-194, and Thr-201 to Ile-212. Positions Arg-252–Gln-645 form a coiled coil. Ser-661 is modified (phosphoserine; by NEK2).

Homomer. Interacts with CROCC/rootletin and CEP250. Interacts with CEP44. Interacts with CCDC102B (via N-terminus). Post-translationally, phosphorylated by NEK2 during misosis, phosphorylation reduces centrosomal localization which subsequently leads to centrosome separation.

The protein localises to the cytoplasm. It localises to the cytoskeleton. Its subcellular location is the microtubule organizing center. The protein resides in the centrosome. Functionally, component of the proteinaceous fiber-like linker between two centrioles, required for centrosome cohesion. The protein is Leucine-rich repeat-containing protein 45 (LRRC45) of Homo sapiens (Human).